The following is a 263-amino-acid chain: Outer membrane protein OmpK (263 aa).

The signal sequence occupies residues 1 to 20 (MRKSLLALSLLAATSAPVLA).

It belongs to the nucleoside-specific channel-forming outer membrane porin (Tsx) (TC 1.B.10) family.

The protein resides in the cell outer membrane. Its function is as follows. Serves as receptor for a broad-host-range vibriophage, KVP40. The sequence is that of Outer membrane protein OmpK from Vibrio parahaemolyticus.